A 335-amino-acid polypeptide reads, in one-letter code: D-alanine--D-alanine ligase (335 aa).

Residues 124-330 (KMWFSALGVP…FTEYLSDVIS (207 aa)) form the ATP-grasp domain. Residue 154–209 (AFDTWGSVFIKAASQGSSVGCYKVDVRDNIAKVLEEAFGYAPYVVVEKTIKARELE) participates in ATP binding. The Mg(2+) site is built by aspartate 284, glutamate 297, and asparagine 299.

The protein belongs to the D-alanine--D-alanine ligase family. Mg(2+) is required as a cofactor. The cofactor is Mn(2+).

The protein resides in the cytoplasm. The enzyme catalyses 2 D-alanine + ATP = D-alanyl-D-alanine + ADP + phosphate + H(+). Its pathway is cell wall biogenesis; peptidoglycan biosynthesis. In terms of biological role, cell wall formation. The chain is D-alanine--D-alanine ligase from Shewanella denitrificans (strain OS217 / ATCC BAA-1090 / DSM 15013).